We begin with the raw amino-acid sequence, 97 residues long: Acylphosphatase (97 aa).

One can recognise an Acylphosphatase-like domain in the interval Thr-11–His-97. Active-site residues include Arg-26 and Asn-44. The tract at residues Arg-76–His-97 is disordered. A compositionally biased stretch (basic and acidic residues) spans Gly-82–His-97.

Belongs to the acylphosphatase family.

It catalyses the reaction an acyl phosphate + H2O = a carboxylate + phosphate + H(+). This is Acylphosphatase (acyP) from Paraburkholderia xenovorans (strain LB400).